The sequence spans 423 residues: 26S proteasome regulatory subunit 6A homolog (423 aa).

Residue 211–218 (GPPGTGKT) coordinates ATP.

The protein belongs to the AAA ATPase family.

Its subcellular location is the cytoplasm. It localises to the nucleus. Functionally, the 26S proteasome is involved in the ATP-dependent degradation of ubiquitinated proteins. The regulatory (or ATPase) complex confers ATP dependency and substrate specificity to the 26S complex. The polypeptide is 26S proteasome regulatory subunit 6A homolog (TBP1) (Solanum lycopersicum (Tomato)).